Consider the following 102-residue polypeptide: Small ribosomal subunit protein bS20 (102 aa).

This sequence belongs to the bacterial ribosomal protein bS20 family.

Binds directly to 16S ribosomal RNA. The sequence is that of Small ribosomal subunit protein bS20 from Synechococcus sp. (strain WH7803).